A 397-amino-acid chain; its full sequence is Small ribosomal subunit protein mS29 (397 aa).

The N-terminal 17 residues, 1–17, are a transit peptide targeting the mitochondrion; sequence MLKGMTRLVSRVHKLDP. Residues Lys-174 and Lys-206 each carry the N6-acetyllysine modification.

It belongs to the mitochondrion-specific ribosomal protein mS29 family. As to quaternary structure, component of the mitochondrial ribosome small subunit (28S) which comprises a 12S rRNA and about 30 distinct proteins. Interacts with DELE1. Interacts with NOA1.

It localises to the mitochondrion. The catalysed reaction is GTP + H2O = GDP + phosphate + H(+). Functionally, as a component of the mitochondrial small ribosomal subunit, it plays a role in the translation of mitochondrial mRNAs. Involved in mediating interferon-gamma-induced cell death. Displays GTPase activity in vitro. This chain is Small ribosomal subunit protein mS29, found in Bos taurus (Bovine).